A 72-amino-acid polypeptide reads, in one-letter code: Translation initiation factor IF-1 (72 aa).

The S1-like domain maps to 1–72; it reads MTKEDCIEMQ…SKGRIIFRSR (72 aa).

It belongs to the IF-1 family. In terms of assembly, component of the 30S ribosomal translation pre-initiation complex which assembles on the 30S ribosome in the order IF-2 and IF-3, IF-1 and N-formylmethionyl-tRNA(fMet); mRNA recruitment can occur at any time during PIC assembly.

The protein resides in the cytoplasm. One of the essential components for the initiation of protein synthesis. Stabilizes the binding of IF-2 and IF-3 on the 30S subunit to which N-formylmethionyl-tRNA(fMet) subsequently binds. Helps modulate mRNA selection, yielding the 30S pre-initiation complex (PIC). Upon addition of the 50S ribosomal subunit IF-1, IF-2 and IF-3 are released leaving the mature 70S translation initiation complex. The sequence is that of Translation initiation factor IF-1 from Buchnera aphidicola subsp. Baizongia pistaciae (strain Bp).